The sequence spans 941 residues: Pre-mRNA-processing factor 6 (941 aa).

Residues 1 to 79 are disordered; the sequence is MNKKKKPFLG…DEDLNDTNYD (79 aa). Positions 39-65 are enriched in basic and acidic residues; that stretch reads DANDPVDDRHAPPGKRTVGDQMKKNQA. The span at 66 to 78 shows a compositional bias: acidic residues; it reads ADDDDEDLNDTNY. S143 is subject to Phosphoserine. Residues T180, T266, and T275 each carry the phosphothreonine modification. S279 carries the post-translational modification Phosphoserine. 9 HAT repeats span residues 384–416, 418–444, 445–476, 554–586, 588–620, 622–654, 689–721, 723–755, and 855–887; these read TDIR…LEEP, DARI…ARLE, TYEN…LEEA, NALE…FEKN, GTRE…SKWL, GDVP…LESE, GNIT…IEEQ, ELME…LEEK, and RKIT…FELQ.

As to quaternary structure, identified in the spliceosome B complex. Identified in the spliceosome C complex. Associates with the U5 snRNP particle. Component of the U4/U6-U5 tri-snRNP complex composed of the U4, U6 and U5 snRNAs and at least PRPF3, PRPF4, PRPF6, PRPF8, PRPF31, SNRNP200, TXNL4A, SNRNP40, DDX23, CD2BP2, PPIH, SNU13, EFTUD2, SART1 and USP39, LSm proteins LSm2-8 and Sm proteins. Interacts with ARAF1. Interacts with AR and NR3C1, but not ESR1, independently of the presence of hormones. Interacts with USH1G. Phosphorylated by PRP4K during spliceosome assembly.

Its subcellular location is the nucleus. It localises to the nucleoplasm. The protein resides in the nucleus speckle. Involved in pre-mRNA splicing as component of the U4/U6-U5 tri-snRNP complex, one of the building blocks of the spliceosome. Enhances dihydrotestosterone-induced transactivation activity of AR, as well as dexamethasone-induced transactivation activity of NR3C1, but does not affect estrogen-induced transactivation. This chain is Pre-mRNA-processing factor 6 (Prpf6), found in Rattus norvegicus (Rat).